We begin with the raw amino-acid sequence, 434 residues long: Serine hydroxymethyltransferase (434 aa).

(6S)-5,6,7,8-tetrahydrofolate-binding positions include leucine 133 and 137 to 139; that span reads GHL. N6-(pyridoxal phosphate)lysine is present on lysine 242.

It belongs to the SHMT family. Homodimer. Requires pyridoxal 5'-phosphate as cofactor.

It is found in the cytoplasm. The enzyme catalyses (6R)-5,10-methylene-5,6,7,8-tetrahydrofolate + glycine + H2O = (6S)-5,6,7,8-tetrahydrofolate + L-serine. It functions in the pathway one-carbon metabolism; tetrahydrofolate interconversion. The protein operates within amino-acid biosynthesis; glycine biosynthesis; glycine from L-serine: step 1/1. Functionally, catalyzes the reversible interconversion of serine and glycine with tetrahydrofolate (THF) serving as the one-carbon carrier. This reaction serves as the major source of one-carbon groups required for the biosynthesis of purines, thymidylate, methionine, and other important biomolecules. Also exhibits THF-independent aldolase activity toward beta-hydroxyamino acids, producing glycine and aldehydes, via a retro-aldol mechanism. This is Serine hydroxymethyltransferase from Methylorubrum extorquens (strain CM4 / NCIMB 13688) (Methylobacterium extorquens).